The sequence spans 1191 residues: Putative glycoside hydrolase 22789 (1191 aa).

Low complexity predominate over residues 173-187 (PSSSGASSVLPSPSA). Positions 173-221 (PSSSGASSVLPSPSAHTPDAATDANHLPNPDPASGRQELTRAGRPARKK) are disordered.

The protein belongs to the glycoside hydrolase-like 3 (GHL3) family.

The sequence is that of Putative glycoside hydrolase 22789 from Monosiga brevicollis (Choanoflagellate).